A 209-amino-acid chain; its full sequence is Ribosome maturation factor RimM (209 aa).

The tract at residues Met1 to Pro28 is disordered. The region spanning Glu123–Leu197 is the PRC barrel domain.

Belongs to the RimM family. In terms of assembly, binds ribosomal protein uS19.

Its subcellular location is the cytoplasm. In terms of biological role, an accessory protein needed during the final step in the assembly of 30S ribosomal subunit, possibly for assembly of the head region. Essential for efficient processing of 16S rRNA. May be needed both before and after RbfA during the maturation of 16S rRNA. It has affinity for free ribosomal 30S subunits but not for 70S ribosomes. This Methylobacterium sp. (strain 4-46) protein is Ribosome maturation factor RimM.